We begin with the raw amino-acid sequence, 217 residues long: Translation initiation factor IF-3 (217 aa).

Residues 185-217 (YNLPETETTRIREENREKQKEKENTSKEGNKDA) form a disordered region. The span at 191–217 (ETTRIREENREKQKEKENTSKEGNKDA) shows a compositional bias: basic and acidic residues.

This sequence belongs to the IF-3 family. Monomer.

Its subcellular location is the cytoplasm. Its function is as follows. IF-3 binds to the 30S ribosomal subunit and shifts the equilibrium between 70S ribosomes and their 50S and 30S subunits in favor of the free subunits, thus enhancing the availability of 30S subunits on which protein synthesis initiation begins. In Methylacidiphilum infernorum (isolate V4) (Methylokorus infernorum (strain V4)), this protein is Translation initiation factor IF-3.